The sequence spans 170 residues: Probable T4-type lysozyme 1 (170 aa).

The active-site Proton donor is the E13. D22 acts as the Nucleophile in catalysis.

Belongs to the glycosyl hydrolase 24 family.

The catalysed reaction is Hydrolysis of (1-&gt;4)-beta-linkages between N-acetylmuramic acid and N-acetyl-D-glucosamine residues in a peptidoglycan and between N-acetyl-D-glucosamine residues in chitodextrins.. This is Probable T4-type lysozyme 1 from Dictyostelium discoideum (Social amoeba).